Consider the following 191-residue polypeptide: Xanthine phosphoribosyltransferase (191 aa).

Xanthine is bound by residues Leu-20 and Asn-27. 128-132 contributes to the 5-phospho-alpha-D-ribose 1-diphosphate binding site; sequence ANGQA. Lys-156 is a xanthine binding site.

This sequence belongs to the purine/pyrimidine phosphoribosyltransferase family. Xpt subfamily. As to quaternary structure, homodimer.

Its subcellular location is the cytoplasm. The catalysed reaction is XMP + diphosphate = xanthine + 5-phospho-alpha-D-ribose 1-diphosphate. The protein operates within purine metabolism; XMP biosynthesis via salvage pathway; XMP from xanthine: step 1/1. Functionally, converts the preformed base xanthine, a product of nucleic acid breakdown, to xanthosine 5'-monophosphate (XMP), so it can be reused for RNA or DNA synthesis. This chain is Xanthine phosphoribosyltransferase, found in Levilactobacillus brevis (strain ATCC 367 / BCRC 12310 / CIP 105137 / JCM 1170 / LMG 11437 / NCIMB 947 / NCTC 947) (Lactobacillus brevis).